The chain runs to 162 residues: MNFEKKLNGILSFTYLALVLCLVMPFMLILVLDTTFTFNKFNLNFVYRQIVELIVLSIFAGFITSFALYNKICRISTEELKRDILENNGLKTIFKIAQYEVMVSIFYSLLLLIILLNKQLLYYGFTAIFQIFFTFCAIFVPLFIFGSLVCRTILLHKIRGTT.

The next 4 membrane-spanning stretches (helical) occupy residues 10–30 (ILSFTYLALVLCLVMPFMLIL), 50–70 (IVELIVLSIFAGFITSFALYN), 96–116 (IAQYEVMVSIFYSLLLLIILL), and 125–145 (FTAIFQIFFTFCAIFVPLFIF).

Its subcellular location is the cell membrane. This is an uncharacterized protein from Methanocaldococcus jannaschii (strain ATCC 43067 / DSM 2661 / JAL-1 / JCM 10045 / NBRC 100440) (Methanococcus jannaschii).